Reading from the N-terminus, the 354-residue chain is Probable L-ascorbate-6-phosphate lactonase UlaG (354 aa).

This sequence belongs to the UlaG family. It depends on a divalent metal cation as a cofactor.

It localises to the cytoplasm. It carries out the reaction L-ascorbate 6-phosphate + H2O = 3-dehydro-L-gulonate 6-phosphate. It functions in the pathway cofactor degradation; L-ascorbate degradation; D-xylulose 5-phosphate from L-ascorbate: step 1/4. In terms of biological role, probably catalyzes the hydrolysis of L-ascorbate-6-P into 3-keto-L-gulonate-6-P. Is essential for L-ascorbate utilization under anaerobic conditions. This Shigella flexneri protein is Probable L-ascorbate-6-phosphate lactonase UlaG.